Consider the following 496-residue polypeptide: Cytochrome P450 71D178 (496 aa).

Residues 1–21 (MDISISWVVIILLVLSYLILM) form a helical; Signal-anchor for type II membrane protein membrane-spanning segment. Cys435 is a binding site for heme.

Belongs to the cytochrome P450 family. It depends on heme as a cofactor. As to expression, expressed in flowers, leaves and stems, especially in glandular trichomes.

The protein localises to the membrane. It catalyses the reaction (4S)-limonene + reduced [NADPH--hemoprotein reductase] + O2 = (1S,5R)-carveol + oxidized [NADPH--hemoprotein reductase] + H2O + H(+). It carries out the reaction gamma-terpinene + 2 reduced [NADPH--hemoprotein reductase] + 2 O2 = carvacrol + 2 oxidized [NADPH--hemoprotein reductase] + 3 H2O + 2 H(+). The catalysed reaction is gamma-terpinene + 2 reduced [NADPH--hemoprotein reductase] + 2 O2 = thymol + 2 oxidized [NADPH--hemoprotein reductase] + 3 H2O + 2 H(+). The enzyme catalyses (4R)-limonene + reduced [NADPH--hemoprotein reductase] + O2 = (1R,6S)-isopiperitenol + oxidized [NADPH--hemoprotein reductase] + H2O + H(+). It functions in the pathway secondary metabolite biosynthesis; terpenoid biosynthesis. Functionally, involved in the biosynthesis of phenolic monoterpenes natural products thymol and carvacrol which have a broad range of biological activities acting as antimicrobial compounds, insecticides, antioxidants and pharmaceutical agents. Catalyzes the C2- and C3-hydroxylation of gamma-terpinene to produce carvacrol and thymol, respectively. Also mediates the C6-hydroxylation of (4S)-limonene to form carveol and the C3-hydroxylation of (4R)-limonene to generate (+)-trans-isopiperitenol. The protein is Cytochrome P450 71D178 of Origanum vulgare (Wild marjoram).